Consider the following 591-residue polypeptide: Glucose-6-phosphate isomerase (591 aa).

Catalysis depends on glutamate 380, which acts as the Proton donor. Catalysis depends on residues histidine 411 and lysine 540.

Belongs to the GPI family. Homodimer.

It localises to the cytoplasm. It carries out the reaction alpha-D-glucose 6-phosphate = beta-D-fructose 6-phosphate. It functions in the pathway carbohydrate degradation; glycolysis; D-glyceraldehyde 3-phosphate and glycerone phosphate from D-glucose: step 2/4. This chain is Glucose-6-phosphate isomerase (GGI.R1), found in Plasmodium falciparum.